A 331-amino-acid polypeptide reads, in one-letter code: Tetraacyldisaccharide 4'-kinase (331 aa).

Residue 60–67 participates in ATP binding; it reads TVGGTGKT.

The protein belongs to the LpxK family.

It carries out the reaction a lipid A disaccharide + ATP = a lipid IVA + ADP + H(+). It functions in the pathway glycolipid biosynthesis; lipid IV(A) biosynthesis; lipid IV(A) from (3R)-3-hydroxytetradecanoyl-[acyl-carrier-protein] and UDP-N-acetyl-alpha-D-glucosamine: step 6/6. In terms of biological role, transfers the gamma-phosphate of ATP to the 4'-position of a tetraacyldisaccharide 1-phosphate intermediate (termed DS-1-P) to form tetraacyldisaccharide 1,4'-bis-phosphate (lipid IVA). The protein is Tetraacyldisaccharide 4'-kinase of Pseudomonas syringae pv. syringae (strain B728a).